A 427-amino-acid polypeptide reads, in one-letter code: Glutamate-1-semialdehyde 2,1-aminomutase (427 aa).

K265 carries the N6-(pyridoxal phosphate)lysine modification.

It belongs to the class-III pyridoxal-phosphate-dependent aminotransferase family. HemL subfamily. Homodimer. Requires pyridoxal 5'-phosphate as cofactor.

It localises to the cytoplasm. The enzyme catalyses (S)-4-amino-5-oxopentanoate = 5-aminolevulinate. The protein operates within porphyrin-containing compound metabolism; protoporphyrin-IX biosynthesis; 5-aminolevulinate from L-glutamyl-tRNA(Glu): step 2/2. This chain is Glutamate-1-semialdehyde 2,1-aminomutase, found in Pseudomonas syringae pv. tomato (strain ATCC BAA-871 / DC3000).